The chain runs to 382 residues: Neuropeptide Y receptor type 2 (382 aa).

Positions 1–39 are disordered; that stretch reads MGPIGAEADENQTVEEMKMEPSGPGHTTPRGELAPDSEP. The Extracellular segment spans residues 1 to 46; sequence MGPIGAEADENQTVEEMKMEPSGPGHTTPRGELAPDSEPELKDSTK. Asn-11 is a glycosylation site (N-linked (GlcNAc...) asparagine). The chain crosses the membrane as a helical span at residues 47 to 67; that stretch reads LIEVQIILILAYCSIILLGVV. At 68–87 the chain is on the cytoplasmic side; sequence GNSLVIHVVIKFKSMRTVTN. The chain crosses the membrane as a helical span at residues 88-108; that stretch reads FFIANLAVADLLVNTLCLPFT. The Extracellular segment spans residues 109–125; that stretch reads LTYTLMGEWKMGPVLCH. Cys-124 and Cys-204 are oxidised to a cystine. The helical transmembrane segment at 126–146 threads the bilayer; it reads LVPYAQGLAVQVSTITLTVIA. The Cytoplasmic segment spans residues 147-166; it reads LDRHRCIVYHLESKISKRIS. Residues 167-187 form a helical membrane-spanning segment; that stretch reads FLIIGLAWGISALLASPLAIF. Residues 188–217 are Extracellular-facing; the sequence is REYSLIEIIPDFEIVACTEKWPGEEKSIYG. A helical transmembrane segment spans residues 218 to 238; sequence TVYSLSSLLILYVLPLGIISF. At 239–269 the chain is on the cytoplasmic side; that stretch reads SYARIWSKLKNHVSPGGVNDHYHQRRQKTTK. The chain crosses the membrane as a helical span at residues 270 to 290; it reads MLVCVVVVFAVSWLPLHAFQL. Over 291-305 the chain is Extracellular; the sequence is AVDIDSQVLDLKEYK. Residues 306-326 traverse the membrane as a helical segment; that stretch reads LIFTVFHIIAMCSTFANPLLY. Residues 327 to 382 lie on the Cytoplasmic side of the membrane; that stretch reads GWMNSNYRKAFLSAFRCEQRLDAIHSEVSMTSKAKKNLEATKNGGPDDSFTEATNV. Residue Cys-343 is the site of S-palmitoyl cysteine attachment. The tract at residues 363–382 is disordered; it reads NLEATKNGGPDDSFTEATNV.

It belongs to the G-protein coupled receptor 1 family.

The protein localises to the cell membrane. Its function is as follows. Receptor for neuropeptide Y and peptide YY. The polypeptide is Neuropeptide Y receptor type 2 (NPY2R) (Sus scrofa (Pig)).